Reading from the N-terminus, the 409-residue chain is Tryptophan synthase beta chain (409 aa).

N6-(pyridoxal phosphate)lysine is present on Lys-95.

It belongs to the TrpB family. As to quaternary structure, tetramer of two alpha and two beta chains. Pyridoxal 5'-phosphate serves as cofactor.

The catalysed reaction is (1S,2R)-1-C-(indol-3-yl)glycerol 3-phosphate + L-serine = D-glyceraldehyde 3-phosphate + L-tryptophan + H2O. It participates in amino-acid biosynthesis; L-tryptophan biosynthesis; L-tryptophan from chorismate: step 5/5. The beta subunit is responsible for the synthesis of L-tryptophan from indole and L-serine. The chain is Tryptophan synthase beta chain from Pseudomonas syringae pv. syringae (strain B728a).